We begin with the raw amino-acid sequence, 517 residues long: GMP synthase [glutamine-hydrolyzing] (517 aa).

Positions 9 to 199 constitute a Glutamine amidotransferase type-1 domain; it reads RILILDFGSQ…VLGVCGCERL (191 aa). Cys-86 (nucleophile) is an active-site residue. Active-site residues include His-173 and Glu-175. The GMPS ATP-PPase domain occupies 200 to 392; the sequence is WTSESIIEDA…LGLPYNMLYR (193 aa). 227-233 lines the ATP pocket; it reads SGGVDSS.

As to quaternary structure, homodimer.

It catalyses the reaction XMP + L-glutamine + ATP + H2O = GMP + L-glutamate + AMP + diphosphate + 2 H(+). It functions in the pathway purine metabolism; GMP biosynthesis; GMP from XMP (L-Gln route): step 1/1. Its function is as follows. Catalyzes the synthesis of GMP from XMP. In Vibrio cholerae serotype O1 (strain ATCC 39541 / Classical Ogawa 395 / O395), this protein is GMP synthase [glutamine-hydrolyzing].